The chain runs to 966 residues: Insulin-degrading enzyme-like 2 (966 aa).

Zn(2+) is bound at residue His-71. Glu-74 (proton acceptor) is an active-site residue. His-75 contacts Zn(2+). Residue Glu-145 is part of the active site. Zn(2+) is bound at residue Glu-152.

Belongs to the peptidase M16 family. The cofactor is Zn(2+).

This is Insulin-degrading enzyme-like 2 from Arabidopsis thaliana (Mouse-ear cress).